The chain runs to 498 residues: MVPVVALVGRPNVGKSTLFNRLTRTRDALVADFPGLTRDRKYGQARLGEEHEFIVIDTGGIDGTEEGVETKMAEQSLAAIDEADVVLFLVDGRAGLTPSDEAIAAHLRKIEKPAMLVVNKIDGIDADAACADFWQLGVDDMYQIAAAHGRGVTALLERALAPFFDDLLASESEDGEIEDLTEFEDEELAVEDYTEEDAEAEFKRLQDQPIKLAIIGRPNVGKSTLTNRILGEERVVVYDMPGTTRDSIYIPMERDGREYVLIDTAGVRRRGRINETVEKFSVVKTLKAVEDANVVLLVIDARENISDQDLSLLGFALNAGRSIVLAVNKWDGLDNEVKENVKKELDRRLGFVDFARIHFISALHGTGVGHLFESIQEAYKSATTRVGTSVLTRIMKMATDDHQPPMVRGRRIKLKYAHAGGYNPPIVVVHGNMVRDLPDSYKRYLMNYFRKSLEIMGTPIRINFQNSDNPYENRTNKLTLSQERKRKRMMSAVKNRNK.

2 consecutive EngA-type G domains span residues 3-167 (PVVA…FDDL) and 210-383 (IKLA…KSAT). GTP-binding positions include 9–16 (GRPNVGKS), 57–61 (DTGGI), 119–122 (NKID), 216–223 (GRPNVGKS), 263–267 (DTAGV), and 328–331 (NKWD). Positions 384–468 (TRVGTSVLTR…PIRINFQNSD (85 aa)) constitute a KH-like domain.

It belongs to the TRAFAC class TrmE-Era-EngA-EngB-Septin-like GTPase superfamily. EngA (Der) GTPase family. In terms of assembly, associates with the 50S ribosomal subunit.

Its function is as follows. GTPase that plays an essential role in the late steps of ribosome biogenesis. The protein is GTPase Der of Vibrio campbellii (strain ATCC BAA-1116).